Here is a 190-residue protein sequence, read N- to C-terminus: Sec-independent protein translocase protein TatB (190 aa).

Residues 2–22 (LPDIGGTELLVIAAVALIVVG) form a helical membrane-spanning segment. A disordered region spans residues 130–190 (IVSKPARKPP…KASTNSDITS (61 aa)). Positions 134–144 (PARKPPAKKAA) are enriched in basic residues. Positions 145–163 (AKPAAKAELVSKPKASAKA) are enriched in low complexity.

It belongs to the TatB family. As to quaternary structure, the Tat system comprises two distinct complexes: a TatABC complex, containing multiple copies of TatA, TatB and TatC subunits, and a separate TatA complex, containing only TatA subunits. Substrates initially bind to the TatABC complex, which probably triggers association of the separate TatA complex to form the active translocon.

The protein resides in the cell inner membrane. Part of the twin-arginine translocation (Tat) system that transports large folded proteins containing a characteristic twin-arginine motif in their signal peptide across membranes. Together with TatC, TatB is part of a receptor directly interacting with Tat signal peptides. TatB may form an oligomeric binding site that transiently accommodates folded Tat precursor proteins before their translocation. This is Sec-independent protein translocase protein TatB from Caulobacter sp. (strain K31).